The following is a 419-amino-acid chain: UDP-N-acetylmuramoylalanine--D-glutamate ligase (419 aa).

An ATP-binding site is contributed by 109-115; the sequence is GSTGKTT.

This sequence belongs to the MurCDEF family.

Its subcellular location is the cytoplasm. It carries out the reaction UDP-N-acetyl-alpha-D-muramoyl-L-alanine + D-glutamate + ATP = UDP-N-acetyl-alpha-D-muramoyl-L-alanyl-D-glutamate + ADP + phosphate + H(+). Its pathway is cell wall biogenesis; peptidoglycan biosynthesis. Functionally, cell wall formation. Catalyzes the addition of glutamate to the nucleotide precursor UDP-N-acetylmuramoyl-L-alanine (UMA). This chain is UDP-N-acetylmuramoylalanine--D-glutamate ligase, found in Chlamydia felis (strain Fe/C-56) (Chlamydophila felis).